Consider the following 191-residue polypeptide: Flavin reductase (NADH) (191 aa).

46 to 52 is an FAD binding site; the sequence is YGLTCSA. Ser-55 contacts NAD(+). 72 to 73 serves as a coordination point for FAD; the sequence is RV. Residues His-144 and 166 to 169 contribute to the NAD(+) site; that span reads YWRR.

Belongs to the non-flavoprotein flavin reductase family.

The enzyme catalyses a reduced flavin + NAD(+) = an oxidized flavin + NADH + 2 H(+). Catalyzes the reduction of flavin by NADH. Subsequently, the reduced flavins is transferred to the tetracycline 7-halogenase CtcP. This chain is Flavin reductase (NADH), found in Kitasatospora aureofaciens (Streptomyces aureofaciens).